The sequence spans 5043 residues: Polyketide synthase PksJ (5043 aa).

Positions alanine 141–threonine 481 are adenylation 1. A Carrier 1 domain is found at arginine 590–glutamate 667. At serine 627 the chain carries O-(pantetheine 4'-phosphoryl)serine. The condensation stretch occupies residues glutamine 690 to asparagine 989. The tract at residues threonine 1181–valine 1578 is adenylation 2. Residues threonine 1654 to arginine 1729 enclose the Carrier 2 domain. The residue at position 1689 (serine 1689) is an O-(pantetheine 4'-phosphoryl)serine. Residues aspartate 1760–glutamine 2186 enclose the Ketosynthase family 3 (KS3) 1 domain. Residues cysteine 1932, histidine 2068, and histidine 2108 each act as for beta-ketoacyl synthase 1 activity in the active site. Residues histidine 2374–glutamate 2499 form an N-terminal hotdog fold region. Residues histidine 2374 to threonine 2661 enclose the PKS/mFAS DH domain. Residue histidine 2403 is the Proton acceptor; for dehydratase activity of the active site. The tract at residues glycine 2513–threonine 2661 is C-terminal hotdog fold. The active-site Proton donor; for dehydratase activity is aspartate 2575. Carrier domains are found at residues arginine 3114–tyrosine 3188 and serine 3212–histidine 3286. 2 positions are modified to O-(pantetheine 4'-phosphoryl)serine: serine 3148 and serine 3246. The tract at residues valine 3291–threonine 3314 is disordered. Residues phenylalanine 3339–glutamate 3779 enclose the Ketosynthase family 3 (KS3) 2 domain. Active-site for beta-ketoacyl synthase 2 activity residues include cysteine 3511, histidine 3646, and histidine 3695. A coiled-coil region spans residues arginine 3839–glutamate 3872. Residues glycine 4459–tyrosine 4536 enclose the Carrier 5 domain. Residue serine 4496 is modified to O-(pantetheine 4'-phosphoryl)serine. The Ketosynthase family 3 (KS3) 3 domain maps to alanine 4588–alanine 4992. Residue cysteine 4743 is the For beta-ketoacyl synthase 3 activity of the active site.

Belongs to the ATP-dependent AMP-binding enzyme family. Pantetheine 4'-phosphate serves as cofactor.

Its subcellular location is the cytoplasm. The protein operates within antibiotic biosynthesis; bacillaene biosynthesis. In terms of biological role, involved in some intermediate steps for the synthesis of the antibiotic polyketide bacillaene which is involved in secondary metabolism. This is Polyketide synthase PksJ (pksJ) from Bacillus subtilis (strain 168).